The sequence spans 258 residues: Imidazole glycerol phosphate synthase subunit HisF (258 aa).

Active-site residues include D11 and D130.

Belongs to the HisA/HisF family. Heterodimer of HisH and HisF.

Its subcellular location is the cytoplasm. The catalysed reaction is 5-[(5-phospho-1-deoxy-D-ribulos-1-ylimino)methylamino]-1-(5-phospho-beta-D-ribosyl)imidazole-4-carboxamide + L-glutamine = D-erythro-1-(imidazol-4-yl)glycerol 3-phosphate + 5-amino-1-(5-phospho-beta-D-ribosyl)imidazole-4-carboxamide + L-glutamate + H(+). It participates in amino-acid biosynthesis; L-histidine biosynthesis; L-histidine from 5-phospho-alpha-D-ribose 1-diphosphate: step 5/9. Its function is as follows. IGPS catalyzes the conversion of PRFAR and glutamine to IGP, AICAR and glutamate. The HisF subunit catalyzes the cyclization activity that produces IGP and AICAR from PRFAR using the ammonia provided by the HisH subunit. This chain is Imidazole glycerol phosphate synthase subunit HisF, found in Methylobacterium sp. (strain 4-46).